The following is a 276-amino-acid chain: Cytoplasmic envelopment protein 1 (276 aa).

This sequence belongs to the herpesviridae cytoplasmic envelopment protein 1 family.

The protein resides in the virion. Its subcellular location is the virion tegument. It localises to the host cytoplasm. The protein localises to the host Golgi apparatus. In terms of biological role, plays a critical role in cytoplasmic virus egress. Participates in the final step of tegumentation and envelope acquisition within the host cytoplasm. The protein is Cytoplasmic envelopment protein 1 (42) of Equus caballus (Horse).